The primary structure comprises 624 residues: ATP-dependent zinc metalloprotease FtsH (624 aa).

The Cytoplasmic portion of the chain corresponds to 1–7; that stretch reads MPRAPFS. A helical membrane pass occupies residues 8–28; that stretch reads LLALVLGLAFLAWAFSLAGTV. The Periplasmic segment spans residues 29 to 103; the sequence is GAPSGTVNYT…VRVEPPQGQN (75 aa). Residues 104–124 form a helical membrane-spanning segment; sequence ALGFLWPLLLVGLLIGALYYF. Topologically, residues 125–624 are cytoplasmic; that stretch reads SRNGRAGPSD…VKPGGALGGA (500 aa). Residues alanine 159, 199 to 203, and histidine 204 contribute to the ATP site; that span reads GVGKT. Histidine 418 contributes to the Zn(2+) binding site. Residue glutamate 419 is part of the active site. Positions 422 and 493 each coordinate Zn(2+). Positions 595–624 are disordered; it reads PLEAPEEAREEREPPRVVPKVKPGGALGGA. The segment covering 600 to 609 has biased composition (basic and acidic residues); sequence EEAREEREPP.

It in the central section; belongs to the AAA ATPase family. In the C-terminal section; belongs to the peptidase M41 family. The isolated soluble domain (residues 126-624) forms a stable hexamer in which the AAA+ domains (residues 126-400) are alternatively open or closed. Requires Zn(2+) as cofactor.

It localises to the cell inner membrane. With respect to regulation, the proteolytic activity is dependent on ATP, both the ATPase and protease activities are inhibited by ADP. Functionally, acts as a processive, ATP-dependent zinc metallopeptidase for both cytoplasmic and membrane proteins. Plays a role in the quality control of integral membrane proteins. Its function is as follows. Degrades preferentially unfolded substrates in a processive, ATP-dependent manner, usually after hydrophobic residues. This Thermus thermophilus (strain ATCC 27634 / DSM 579 / HB8) protein is ATP-dependent zinc metalloprotease FtsH.